The following is a 436-amino-acid chain: UDP-N-acetylmuramate--L-alanine ligase (436 aa).

110-116 (GAHGKTS) provides a ligand contact to ATP.

The protein belongs to the MurCDEF family.

Its subcellular location is the cytoplasm. The catalysed reaction is UDP-N-acetyl-alpha-D-muramate + L-alanine + ATP = UDP-N-acetyl-alpha-D-muramoyl-L-alanine + ADP + phosphate + H(+). It participates in cell wall biogenesis; peptidoglycan biosynthesis. Its function is as follows. Cell wall formation. The protein is UDP-N-acetylmuramate--L-alanine ligase of Lacticaseibacillus paracasei (strain ATCC 334 / BCRC 17002 / CCUG 31169 / CIP 107868 / KCTC 3260 / NRRL B-441) (Lactobacillus paracasei).